The sequence spans 213 residues: Pyrrolidone-carboxylate peptidase (213 aa).

Catalysis depends on residues Glu78, Cys141, and His165.

Belongs to the peptidase C15 family. In terms of assembly, homotetramer.

It localises to the cytoplasm. It carries out the reaction Release of an N-terminal pyroglutamyl group from a polypeptide, the second amino acid generally not being Pro.. Functionally, removes 5-oxoproline from various penultimate amino acid residues except L-proline. The protein is Pyrrolidone-carboxylate peptidase of Alkaliphilus oremlandii (strain OhILAs) (Clostridium oremlandii (strain OhILAs)).